Here is a 465-residue protein sequence, read N- to C-terminus: Iron-sulfur cluster assembly SufBD family protein SE_0610 (465 aa).

It belongs to the iron-sulfur cluster assembly SufBD family.

The polypeptide is Iron-sulfur cluster assembly SufBD family protein SE_0610 (Staphylococcus epidermidis (strain ATCC 12228 / FDA PCI 1200)).